A 532-amino-acid chain; its full sequence is 56 kDa type-specific antigen (532 aa).

An N-terminal signal peptide occupies residues Met-1–Ala-22. A helical membrane pass occupies residues Thr-67–Arg-87. Positions Gln-401–Asp-428 are disordered. Basic and acidic residues predominate over residues Glu-403 to Cys-413. The helical transmembrane segment at Thr-480–Val-500 threads the bilayer.

The protein localises to the cell membrane. Its function is as follows. May be an adherent factor for rickettsial adsorption to the host-cell surface and a determinant of virulence of individual rickettsial strain. It is the major outer membrane protein. This is 56 kDa type-specific antigen from Orientia tsutsugamushi (Rickettsia tsutsugamushi).